Reading from the N-terminus, the 798-residue chain is Phenylalanine--tRNA ligase beta subunit (798 aa).

The 110-residue stretch at 39 to 148 (GKDLDNVVIG…EDAPIGTEYR (110 aa)) folds into the tRNA-binding domain. Residues 401–477 (PQRAEISLNL…RMYGFDNIEA (77 aa)) form the B5 domain. Mg(2+)-binding residues include D455, D461, E464, and E465. The 93-residue stretch at 705 to 797 (SKYPEVLRDL…IKDKYNGEIR (93 aa)) folds into the FDX-ACB domain.

This sequence belongs to the phenylalanyl-tRNA synthetase beta subunit family. Type 1 subfamily. As to quaternary structure, tetramer of two alpha and two beta subunits. Mg(2+) is required as a cofactor.

The protein resides in the cytoplasm. The catalysed reaction is tRNA(Phe) + L-phenylalanine + ATP = L-phenylalanyl-tRNA(Phe) + AMP + diphosphate + H(+). The chain is Phenylalanine--tRNA ligase beta subunit from Fusobacterium nucleatum subsp. nucleatum (strain ATCC 25586 / DSM 15643 / BCRC 10681 / CIP 101130 / JCM 8532 / KCTC 2640 / LMG 13131 / VPI 4355).